Reading from the N-terminus, the 293-residue chain is Protease HtpX (293 aa).

A run of 2 helical transmembrane segments spans residues 4-24 and 34-54; these read IALF…VLSL and GLMI…LLMS. His-139 serves as a coordination point for Zn(2+). Glu-140 is a catalytic residue. His-143 contributes to the Zn(2+) binding site. 2 helical membrane passes run 158-178 and 193-213; these read IVNT…SGFL and LVYF…ASII. Glu-222 contacts Zn(2+).

This sequence belongs to the peptidase M48B family. The cofactor is Zn(2+).

Its subcellular location is the cell inner membrane. The sequence is that of Protease HtpX from Pectobacterium carotovorum subsp. carotovorum (strain PC1).